A 1333-amino-acid chain; its full sequence is Inner capsid protein VP1 (1333 aa).

Positions Met1–Lys10 are enriched in polar residues. Residues Met1–Thr93 are disordered. Positions Arg11–Pro20 are enriched in basic and acidic residues. The segment covering Asp64–Arg82 has biased composition (polar residues).

It belongs to the turreted BTV-fold inner capsid family. Homodecamer; each decamer is made up of two conformers of VP2, called VP2A and VP2B. 12 homodecamers assemble to form an icosahedral capsid.

The protein localises to the virion. Functionally, inner capsid protein that self-assembles to form an icosahedral capsid with a T=2 symmetry, which consists of 120 copies of VP2, with channels at each of its five-fold vertices. This capsid constitutes the innermost concentric layer of the viral mature particle. This is Inner capsid protein VP1 (S1) from Lymantria dispar cypovirus 1 (isolate Rao) (LdCPV-1).